We begin with the raw amino-acid sequence, 480 residues long: ESX-1 secretion system ATPase EccB1 (480 aa).

Residues 44 to 64 (IALGIVVAVLILAGAALLAYF) traverse the membrane as a helical segment. Residues 461-480 (DTLPADPSPRKVPAGASGAP) are disordered.

It belongs to the EccB family. As to quaternary structure, part of the ESX-1 / type VII secretion system (T7SS), which is composed of cytosolic and membrane components. The ESX-1 membrane complex is composed of EccB1, EccCa1, EccCb1, EccD1 and EccE1.

The protein localises to the cell inner membrane. An ATPase. Part of the ESX-1 specialized secretion system, which delivers several virulence factors to host cells during infection, including the key virulence factors EsxA (ESAT-6) and EsxB (CFP-10). This Mycobacterium tuberculosis (strain CDC 1551 / Oshkosh) protein is ESX-1 secretion system ATPase EccB1.